Consider the following 448-residue polypeptide: Protein ECM7 (448 aa).

Residues 1–28 lie on the Cytoplasmic side of the membrane; the sequence is MVMSRIRDTIARPFQNLTALEKVVQWLR. A helical membrane pass occupies residues 29–49; that stretch reads LGTTLLIISFGLALTVGPLSS. The Extracellular portion of the chain corresponds to 50-204; that stretch reads PRTLYMSRLD…MRSLKHKKAN (155 aa). The helical transmembrane segment at 205–225 threads the bilayer; that stretch reads VLHLLYAVISFQVCMLFFMIW. The Cytoplasmic portion of the chain corresponds to 226-246; that stretch reads YYYIKGRFMNALKERALVHIN. Residues 247–267 traverse the membrane as a helical segment; the sequence is SLLSLVVFIGGLISSISLAWV. At 268-287 the chain is on the extracellular side; it reads NYTIQSRINTELEAFGFSYH. A helical transmembrane segment spans residues 288-308; it reads LGVTWFALLWCFAGLISVSCL. At 309–448 the chain is on the cytoplasmic side; the sequence is AWSGLEWCIS…VIKPSSALQF (140 aa). 2 stretches are compositionally biased toward polar residues: residues 351 to 363 and 383 to 406; these read YSQRYPQRQSTSG and VDLNSENDANTSLDHGNPTANISN. 2 disordered regions span residues 351 to 411 and 427 to 448; these read YSQR…GKHE and RSSNDSEESMQRVIKPSSALQF.

Its subcellular location is the membrane. May be involved in cell wall organization and biogenesis. The polypeptide is Protein ECM7 (ECM7) (Saccharomyces cerevisiae (strain ATCC 204508 / S288c) (Baker's yeast)).